The chain runs to 704 residues: Glycine--tRNA ligase beta subunit (704 aa).

It belongs to the class-II aminoacyl-tRNA synthetase family. As to quaternary structure, tetramer of two alpha and two beta subunits.

It localises to the cytoplasm. The enzyme catalyses tRNA(Gly) + glycine + ATP = glycyl-tRNA(Gly) + AMP + diphosphate. The chain is Glycine--tRNA ligase beta subunit from Rhizobium johnstonii (strain DSM 114642 / LMG 32736 / 3841) (Rhizobium leguminosarum bv. viciae).